A 459-amino-acid chain; its full sequence is tRNA modification GTPase MnmE (459 aa).

Residues Arg22, Glu85, and Arg124 each coordinate (6S)-5-formyl-5,6,7,8-tetrahydrofolate. A TrmE-type G domain is found at 221–380 (GLSTVIVGKP…LEIQIRDLFF (160 aa)). Asn231 is a K(+) binding site. GTP-binding positions include 231-236 (NVGKSS), 250-256 (TEVAGTT), and 275-278 (DTAG). Residue Ser235 participates in Mg(2+) binding. Residues Thr250, Val252, and Thr255 each contribute to the K(+) site. Residue Thr256 coordinates Mg(2+). Lys459 is a binding site for (6S)-5-formyl-5,6,7,8-tetrahydrofolate.

The protein belongs to the TRAFAC class TrmE-Era-EngA-EngB-Septin-like GTPase superfamily. TrmE GTPase family. As to quaternary structure, homodimer. Heterotetramer of two MnmE and two MnmG subunits. It depends on K(+) as a cofactor.

It is found in the cytoplasm. Exhibits a very high intrinsic GTPase hydrolysis rate. Involved in the addition of a carboxymethylaminomethyl (cmnm) group at the wobble position (U34) of certain tRNAs, forming tRNA-cmnm(5)s(2)U34. The chain is tRNA modification GTPase MnmE from Staphylococcus aureus (strain USA300 / TCH1516).